The chain runs to 879 residues: Metabotropic glutamate receptor 3 (879 aa).

The first 22 residues, 1–22, serve as a signal peptide directing secretion; that stretch reads MKMLTRLQVLTLALFSKGFLLS. The Extracellular portion of the chain corresponds to 23–576; the sequence is LGDHNFLRRE…EDYIRWEDAW (554 aa). A disulfide bridge connects residues Cys-57 and Cys-99. Residues Ser-151 and 172–174 each bind L-glutamate; that span reads AST. N-linked (GlcNAc...) asparagine glycosylation is present at Asn-209. Tyr-222 provides a ligand contact to L-glutamate. Cystine bridges form between Cys-240–Cys-527, Cys-361–Cys-373, Cys-412–Cys-419, Cys-509–Cys-528, Cys-513–Cys-531, Cys-534–Cys-546, and Cys-549–Cys-562. Asn-292 carries an N-linked (GlcNAc...) asparagine glycan. An L-glutamate-binding site is contributed by Asp-301. An L-glutamate-binding site is contributed by Lys-389. 2 N-linked (GlcNAc...) asparagine glycosylation sites follow: Asn-414 and Asn-439. The helical transmembrane segment at 577 to 599 threads the bilayer; sequence VIGPVTIACLGFMCTCMVVTVFI. The Cytoplasmic portion of the chain corresponds to 600-613; it reads KHNNTPLVKASGRE. A helical membrane pass occupies residues 614–634; that stretch reads LCYILLFGVGLSYCMTFFFIA. Residues 635 to 645 lie on the Extracellular side of the membrane; it reads KPSPVICALRR. A helical transmembrane segment spans residues 646–664; that stretch reads LGLGSSFAICYSALLTKTN. At 665-688 the chain is on the cytoplasmic side; sequence CIARIFDGVKNGAQRPKFISPSSQ. Residues 689 to 709 traverse the membrane as a helical segment; sequence VFICLGLILVQIVMVSVWLIL. Topologically, residues 710–734 are extracellular; it reads EAPGTRRYTLAEKRETVILKCNVKD. The helical transmembrane segment at 735–756 threads the bilayer; sequence SSMLISLTYDVILVILCTVYAF. The Cytoplasmic portion of the chain corresponds to 757 to 769; the sequence is KTRKCPENFNEAK. A helical membrane pass occupies residues 770-792; sequence FIGFTMYTTCIIWLAFLPIFYVT. At 793–802 the chain is on the extracellular side; sequence SSDYRVQTTT. The chain crosses the membrane as a helical span at residues 803–828; the sequence is MCISVSLSGFVVLGCLFAPKVHIILF. Over 829 to 879 the chain is Cytoplasmic; the sequence is QPQKNVVTHRLHLNRFSVSGTGTTYSQSSASTYVPTVCNGREVLDSTTSSL.

Belongs to the G-protein coupled receptor 3 family. In terms of assembly, interacts with TAMALIN.

Its subcellular location is the cell membrane. Its function is as follows. G-protein coupled receptor for glutamate. Ligand binding causes a conformation change that triggers signaling via guanine nucleotide-binding proteins (G proteins) and modulates the activity of down-stream effectors. Signaling inhibits adenylate cyclase activity. In Pongo abelii (Sumatran orangutan), this protein is Metabotropic glutamate receptor 3 (GRM3).